We begin with the raw amino-acid sequence, 384 residues long: uncharacterized protein (384 aa).

This is an uncharacterized protein from Nostoc sp. (strain PCC 7120 / SAG 25.82 / UTEX 2576).